The primary structure comprises 63 residues: SPbeta prophage-derived uncharacterized protein YomP (63 aa).

The chain is SPbeta prophage-derived uncharacterized protein YomP (yomP) from Bacillus subtilis (strain 168).